A 359-amino-acid polypeptide reads, in one-letter code: Probable 2-oxoacid dependent dioxygenase (359 aa).

A Fe2OG dioxygenase domain is found at 207–308 (KGLWMLCHCF…ISVACFFVHT (102 aa)). The Fe cation site is built by histidine 231, aspartate 233, and histidine 287. The segment at 329 to 359 (PPKYRDTTSESSNHYVARKPNGNSSLDHLRI) is disordered. Residues 349 to 359 (NGNSSLDHLRI) show a composition bias toward polar residues.

The protein belongs to the iron/ascorbate-dependent oxidoreductase family. It depends on Fe(2+) as a cofactor. In terms of tissue distribution, expressed in leaves and seeds. All cultivars with seed-only-functional allele have low to non-detectable GSL-OH expression in the leaves.

It carries out the reaction gluconapin + AH2 + O2 = progoitrin + A + H2O. Functionally, necessary for the hydroxylation of but-3-enyl glucosinolate to 2-hydroxybut-3-enyl glucosinolate, which is toxic to insects, bacteria and nematodes, inhibits seed germination and produces bitter flavors. This is Probable 2-oxoacid dependent dioxygenase from Arabidopsis thaliana (Mouse-ear cress).